The following is a 572-amino-acid chain: Proline--tRNA ligase (572 aa).

This sequence belongs to the class-II aminoacyl-tRNA synthetase family. ProS type 1 subfamily. In terms of assembly, homodimer.

Its subcellular location is the cytoplasm. The enzyme catalyses tRNA(Pro) + L-proline + ATP = L-prolyl-tRNA(Pro) + AMP + diphosphate. Its function is as follows. Catalyzes the attachment of proline to tRNA(Pro) in a two-step reaction: proline is first activated by ATP to form Pro-AMP and then transferred to the acceptor end of tRNA(Pro). As ProRS can inadvertently accommodate and process non-cognate amino acids such as alanine and cysteine, to avoid such errors it has two additional distinct editing activities against alanine. One activity is designated as 'pretransfer' editing and involves the tRNA(Pro)-independent hydrolysis of activated Ala-AMP. The other activity is designated 'posttransfer' editing and involves deacylation of mischarged Ala-tRNA(Pro). The misacylated Cys-tRNA(Pro) is not edited by ProRS. The polypeptide is Proline--tRNA ligase (Escherichia coli O7:K1 (strain IAI39 / ExPEC)).